A 139-amino-acid polypeptide reads, in one-letter code: Peptide methionine sulfoxide reductase MsrB (139 aa).

Residues Glu17–Lys139 enclose the MsrB domain. Positions 56, 59, 105, and 108 each coordinate Zn(2+). The active-site Nucleophile is Cys128.

Belongs to the MsrB Met sulfoxide reductase family. Zn(2+) serves as cofactor.

The enzyme catalyses L-methionyl-[protein] + [thioredoxin]-disulfide + H2O = L-methionyl-(R)-S-oxide-[protein] + [thioredoxin]-dithiol. The polypeptide is Peptide methionine sulfoxide reductase MsrB (Bradyrhizobium diazoefficiens (strain JCM 10833 / BCRC 13528 / IAM 13628 / NBRC 14792 / USDA 110)).